A 5154-amino-acid polypeptide reads, in one-letter code: Hydrocephalus-inducing protein (5154 aa).

The segment at 409 to 800 (MILEDSVLDP…VLLSSPSPCG (392 aa)) is interaction with KIF9. Residues 997–1009 (RPKEKQSKKEPGK) are compositionally biased toward basic and acidic residues. Disordered regions lie at residues 997–1033 (RPKEKQSKKEPGKKGSTSSSRRQSKASQEPTDNGNPV), 1966–1988 (ENEEEEMNTSDQGTTSTKRTSIS), 2193–2222 (ADSHFTGSQKQHHQHQSETPQVQISSSPLL), 2383–2423 (KLQQ…QGAT), 2521–2572 (HTGT…KAER), and 2706–2762 (KAQE…DIDQ). Positions 1010 to 1024 (KGSTSSSRRQSKASQ) are enriched in low complexity. Residues 1948–1977 (EMKKSKEEHMKAKYMENLENEEEEMNTSDQ) are a coiled coil. 2 stretches are compositionally biased toward polar residues: residues 1974 to 1988 (TSDQGTTSTKRTSIS) and 2209 to 2220 (SETPQVQISSSP). Residues 2308–2444 (YVVMKAQEKA…LKMESIERKV (137 aa)) adopt a coiled-coil conformation. Basic and acidic residues-rich tracts occupy residues 2383–2398 (KLQQELERQKEEDELK), 2523–2535 (GTDEMSHEADDQR), 2548–2572 (KDRERERLEKERAEKERLEREKAER), and 2721–2734 (KLKDKPEQVRETQK). Residues 2543–2588 (GRKGRKDRERERLEKERAEKERLEREKAERERLEKLKALEERSDVE) adopt a coiled-coil conformation.

As to quaternary structure, interacts with KIF9. As to expression, expressed in brain and testis. Expressed in ciliated epithelial cells lining bronchi and oviduct, and in spermatocytes.

The protein resides in the cell projection. The protein localises to the cilium. It localises to the cytoplasm. Its subcellular location is the cytoskeleton. It is found in the cilium axoneme. The protein resides in the flagellum. In terms of biological role, required for ciliary motility. This is Hydrocephalus-inducing protein (Hydin) from Mus musculus (Mouse).